A 540-amino-acid polypeptide reads, in one-letter code: Cystathionine gamma-synthase 1, chloroplastic (540 aa).

The N-terminal 78 residues, 1–78, are a transit peptide targeting the chloroplast; the sequence is MAVSSCARAF…RNCSNIGVAQ (78 aa). Y203, R205, G233, M234, Y258, S353, and T355 together coordinate pyridoxal 5'-phosphate. The residue at position 356 (K356) is an N6-(pyridoxal phosphate)lysine.

Belongs to the trans-sulfuration enzymes family. Forms homotetramers composed of 2 homodimers. It depends on pyridoxal 5'-phosphate as a cofactor.

It localises to the plastid. The protein resides in the chloroplast. It carries out the reaction O-phospho-L-homoserine + L-cysteine = L,L-cystathionine + phosphate. It catalyses the reaction O-succinyl-L-homoserine + L-cysteine = L,L-cystathionine + succinate + H(+). The protein operates within amino-acid biosynthesis; L-methionine biosynthesis via de novo pathway; L-cystathionine from O-succinyl-L-homoserine: step 1/1. Its activity is regulated as follows. Irreversibly inactivated by DL-propargylglycine. Its function is as follows. Catalyzes the first committed step of methionine (Met) biosynthesis. Catalyzes the formation of L-cystathionine from homoserine esters and L-cysteine, via a gamma-replacement reaction. The protein is Cystathionine gamma-synthase 1, chloroplastic of Nicotiana tabacum (Common tobacco).